Here is a 289-residue protein sequence, read N- to C-terminus: Phosphate import ATP-binding protein PstB (289 aa).

Residues 1 to 37 (MRSIDRPGGQAARPTIGSVAGASNTRTRDARSLPDTP) form a disordered region. Residues 41–284 (AAAENFSFYY…PVRRETEDYI (244 aa)) enclose the ABC transporter domain. An ATP-binding site is contributed by 73 to 80 (GPSGCGKS).

The protein belongs to the ABC transporter superfamily. Phosphate importer (TC 3.A.1.7) family. The complex is composed of two ATP-binding proteins (PstB), two transmembrane proteins (PstC and PstA) and a solute-binding protein (PstS).

It localises to the cell inner membrane. It carries out the reaction phosphate(out) + ATP + H2O = ADP + 2 phosphate(in) + H(+). Functionally, part of the ABC transporter complex PstSACB involved in phosphate import. Responsible for energy coupling to the transport system. The protein is Phosphate import ATP-binding protein PstB of Aromatoleum aromaticum (strain DSM 19018 / LMG 30748 / EbN1) (Azoarcus sp. (strain EbN1)).